The sequence spans 151 residues: Protein NrdI (151 aa).

It belongs to the NrdI family.

In terms of biological role, probably involved in ribonucleotide reductase function. The chain is Protein NrdI from Mycoplasmopsis pulmonis (strain UAB CTIP) (Mycoplasma pulmonis).